The primary structure comprises 352 residues: Probable RNA methyltransferase CV_2253 (352 aa).

The active-site Proton acceptor is Glu-91. Positions 94–320 constitute a Radical SAM core domain; that stretch reads LLPRDGLCVS…TKVRDSAGQD (227 aa). Cys-101 and Cys-325 are disulfide-bonded. Positions 108, 112, and 115 each coordinate [4Fe-4S] cluster. S-adenosyl-L-methionine contacts are provided by residues 153-154, Ser-183, 206-208, and Asn-282; these read GE and SLH. Cys-325 serves as the catalytic S-methylcysteine intermediate.

Belongs to the radical SAM superfamily. RlmN family. [4Fe-4S] cluster is required as a cofactor.

Its subcellular location is the cytoplasm. The chain is Probable RNA methyltransferase CV_2253 from Chromobacterium violaceum (strain ATCC 12472 / DSM 30191 / JCM 1249 / CCUG 213 / NBRC 12614 / NCIMB 9131 / NCTC 9757 / MK).